The sequence spans 400 residues: S-adenosylmethionine synthase (400 aa).

An ATP-binding site is contributed by histidine 17. Residue aspartate 19 participates in Mg(2+) binding. K(+) is bound at residue glutamate 45. L-methionine is bound by residues glutamate 58 and glutamine 101. The flexible loop stretch occupies residues 101–111 (QSPDIAMGVDQ). ATP-binding positions include 177 to 179 (DGK), 244 to 245 (RF), aspartate 253, 259 to 260 (RK), alanine 276, and lysine 280. Aspartate 253 provides a ligand contact to L-methionine. An L-methionine-binding site is contributed by lysine 284.

This sequence belongs to the AdoMet synthase family. In terms of assembly, homotetramer; dimer of dimers. It depends on Mg(2+) as a cofactor. K(+) is required as a cofactor.

The protein localises to the cytoplasm. The catalysed reaction is L-methionine + ATP + H2O = S-adenosyl-L-methionine + phosphate + diphosphate. It participates in amino-acid biosynthesis; S-adenosyl-L-methionine biosynthesis; S-adenosyl-L-methionine from L-methionine: step 1/1. In terms of biological role, catalyzes the formation of S-adenosylmethionine (AdoMet) from methionine and ATP. The overall synthetic reaction is composed of two sequential steps, AdoMet formation and the subsequent tripolyphosphate hydrolysis which occurs prior to release of AdoMet from the enzyme. The chain is S-adenosylmethionine synthase from Bacillus licheniformis (strain ATCC 14580 / DSM 13 / JCM 2505 / CCUG 7422 / NBRC 12200 / NCIMB 9375 / NCTC 10341 / NRRL NRS-1264 / Gibson 46).